Consider the following 291-residue polypeptide: tRNA-uridine aminocarboxypropyltransferase 1 (291 aa).

Positions 158–181 (KNSAYEPSSKRPKFSPENDKNTYE) are disordered. Residues 171-181 (FSPENDKNTYE) are compositionally biased toward basic and acidic residues. A DXTW motif is present at residues 199–202 (DSTW).

It belongs to the TDD superfamily. DTWD1 family.

It localises to the nucleus. The catalysed reaction is a uridine in tRNA + S-adenosyl-L-methionine = a 3-[(3S)-3-amino-3-carboxypropyl]uridine in tRNA + S-methyl-5'-thioadenosine + H(+). Functionally, catalyzes the formation of 3-(3-amino-3-carboxypropyl)uridine (acp3U) at position 20 in the D-loop of several cytoplasmic tRNAs (acp3U(20)). The polypeptide is tRNA-uridine aminocarboxypropyltransferase 1 (Xenopus laevis (African clawed frog)).